We begin with the raw amino-acid sequence, 307 residues long: Mitochondrial brown fat uncoupling protein 1 (307 aa).

The Mitochondrial intermembrane portion of the chain corresponds to 1–10 (MVSLTTSEVH). A helical transmembrane segment spans residues 11–32 (PTMGVKTFSAGISACLADIITF). Solcar repeat units lie at residues 11–102 (PTMG…VQEY), 111–201 (PTLG…MKGA), and 210–295 (DDVP…LKKE). Topologically, residues 33-73 (PLDTAKVRLQIQGEGQTSSTIRYKGVLGTITTLAKTEGWPK) are mitochondrial matrix. Fatty acid 16:0 is bound at residue lysine 56. Residues 74 to 96 (LYSGLPAGIQRQISFASLRIGLY) form a helical membrane-spanning segment. Over 97 to 116 (DTVQEYFSSGKETPPTLGNR) the chain is Mitochondrial intermembrane. The chain crosses the membrane as a helical span at residues 117-133 (ISAGLMTGGVAVFIGQP). Over 134 to 178 (TEVVKVRLQAQSHLHGIKPRYTGTYNAYRIIATTESFSTLWKGTT) the chain is Mitochondrial matrix. The chain crosses the membrane as a helical span at residues 179-195 (PNLMRNVIINRTELVTY). Residues 196-212 (DLMKGALVNNQILADDV) lie on the Mitochondrial intermembrane side of the membrane. Residues 213-232 (PCHLLSALVAGFCTTFLASP) traverse the membrane as a helical segment. Topologically, residues 233 to 266 (ADVVKTRFINSLPGQYPSVPSCAMTMLTKEGPTA) are mitochondrial matrix. The residue at position 254 (cysteine 254) is a Cysteine sulfenic acid (-SOH). A helical transmembrane segment spans residues 267-289 (FFKGFVPSFLRLASWNVIMFVCF). Lysine 269 contacts fatty acid 16:0. The Mitochondrial intermembrane segment spans residues 290–307 (EQLKKELMKSRQTMDCTT).

Belongs to the mitochondrial carrier (TC 2.A.29) family. Most probably functions as a monomer. Binds one purine nucleotide per monomer. However, has also been suggested to function as a homodimer or a homotetramer. Tightly associates with cardiolipin in the mitochondrion inner membrane; may stabilize and regulate its activity. Post-translationally, may undergo sulfenylation upon cold exposure. May increase the sensitivity of UCP1 thermogenic function to the activation by noradrenaline probably through structural effects. May undergo ubiquitin-mediated proteasomal degradation.

It is found in the mitochondrion inner membrane. It catalyses the reaction H(+)(in) = H(+)(out). With respect to regulation, has no constitutive proton transporter activity and has to be activated by long-chain fatty acids/LCFAs. Inhibited by purine nucleotides. Both purine nucleotides and LCFAs bind the cytosolic side of the transporter and directly compete to activate or inhibit it. Activated by noradrenaline and reactive oxygen species. Despite lacking canonical translational encoding for selenocysteine, a small pool of the protein has been observed to selectively incorporate selenocysteine at 'Cys-254'. Selenocysteine-modified protein is highly sensitive to redox modification and may constitute a pool of protein highly sensitive to activation by elevated levels of reactive oxygen species (ROS). In terms of biological role, mitochondrial protein responsible for thermogenic respiration, a specialized capacity of brown adipose tissue and beige fat that participates in non-shivering adaptive thermogenesis to temperature and diet variations and more generally to the regulation of energy balance. Functions as a long-chain fatty acid/LCFA and proton symporter, simultaneously transporting one LCFA and one proton through the inner mitochondrial membrane. However, LCFAs remaining associated with the transporter via their hydrophobic tails, it results in an apparent transport of protons activated by LCFAs. Thereby, dissipates the mitochondrial proton gradient and converts the energy of substrate oxydation into heat instead of ATP. Regulates the production of reactive oxygen species/ROS by mitochondria. This is Mitochondrial brown fat uncoupling protein 1 from Dicrostonyx groenlandicus (Northern collared lemming).